Consider the following 384-residue polypeptide: Alpha-2B adrenergic receptor (384 aa).

A helical transmembrane segment spans residues 1–25 (AIAAVTTFLILFTVFGNALVILAVL). The Cytoplasmic portion of the chain corresponds to 26–36 (TSRSLRAPQNL). The helical transmembrane segment at 37 to 62 (FLVSLAAADILVATLIXPFSLANELL) threads the bilayer. Over 63-72 (GYWYFWHTWC) the chain is Extracellular. C72 and C151 form a disulfide bridge. Residues 73–95 (EVYLALXVLXCTSSIVHLCAISL) form a helical membrane-spanning segment. At 96 to 117 (DRYWAVSRALEYNSKRTPRRIX) the chain is on the cytoplasmic side. Residues 118–140 (GIILTVWLIAAAISLPPLIYKGD) traverse the membrane as a helical segment. Topologically, residues 141 to 156 (QGPQPHGRPQCRLNQE) are extracellular. The helical transmembrane segment at 157–180 (AWYILSSSIGSFFAPCLIMILVYL) threads the bilayer. The Cytoplasmic segment spans residues 181–348 (RIYLIAKRRN…LTREKRFTFV (168 aa)). The segment at 193–306 (GPRAQGASKG…SXGSPQLQQP (114 aa)) is disordered. The span at 288–306 (PEALPASPASXGSPQLQQP) shows a compositional bias: low complexity. The chain crosses the membrane as a helical span at residues 349–372 (LAVVIGVXVLCWFPFFXSYSLGAI). Over 373–381 (CPQHCTVXH) the chain is Extracellular. Residues 382 to 384 (GLF) traverse the membrane as a helical segment.

This sequence belongs to the G-protein coupled receptor 1 family. Adrenergic receptor subfamily. ADRA2B sub-subfamily. Interacts with RAB26. Interacts with PPP1R9B. Interacts with GGA1, GGA2 and GGA3.

It is found in the cell membrane. In terms of biological role, alpha-2 adrenergic receptors mediate the catecholamine-induced inhibition of adenylate cyclase through the action of G proteins. The protein is Alpha-2B adrenergic receptor (ADRA2B) of Echinops telfairi (Lesser hedgehog tenrec).